Consider the following 537-residue polypeptide: CTP synthase (537 aa).

The interval 1 to 265 (MTKYIFVTGG…GKYLTKRLKL (265 aa)) is amidoligase domain. S13 serves as a coordination point for CTP. Residue S13 participates in UTP binding. Residue 14-19 (GLGKGI) participates in ATP binding. Y54 contacts L-glutamine. An ATP-binding site is contributed by D71. Residues D71 and E139 each contribute to the Mg(2+) site. Residues 146-148 (DIE), 186-191 (KTKPTQ), and K222 each bind CTP. Residues 186 to 191 (KTKPTQ) and K222 each bind UTP. Residues 290-532 (EIAIVGKYVK…VRAAKEYKQE (243 aa)) enclose the Glutamine amidotransferase type-1 domain. G351 lines the L-glutamine pocket. Residue C378 is the Nucleophile; for glutamine hydrolysis of the active site. Residues 379–382 (FGFQ), E402, and R459 each bind L-glutamine. Residues H505 and E507 contribute to the active site.

This sequence belongs to the CTP synthase family. Homotetramer.

The catalysed reaction is UTP + L-glutamine + ATP + H2O = CTP + L-glutamate + ADP + phosphate + 2 H(+). It catalyses the reaction L-glutamine + H2O = L-glutamate + NH4(+). The enzyme catalyses UTP + NH4(+) + ATP = CTP + ADP + phosphate + 2 H(+). Its pathway is pyrimidine metabolism; CTP biosynthesis via de novo pathway; CTP from UDP: step 2/2. Its activity is regulated as follows. Allosterically activated by GTP, when glutamine is the substrate; GTP has no effect on the reaction when ammonia is the substrate. The allosteric effector GTP functions by stabilizing the protein conformation that binds the tetrahedral intermediate(s) formed during glutamine hydrolysis. Inhibited by the product CTP, via allosteric rather than competitive inhibition. Its function is as follows. Catalyzes the ATP-dependent amination of UTP to CTP with either L-glutamine or ammonia as the source of nitrogen. Regulates intracellular CTP levels through interactions with the four ribonucleotide triphosphates. The polypeptide is CTP synthase (Pyrococcus furiosus (strain ATCC 43587 / DSM 3638 / JCM 8422 / Vc1)).